The chain runs to 447 residues: uncharacterized protein (447 aa).

Positions Arg-392–Lys-435 are disordered. Positions Lys-395–Ser-407 are enriched in low complexity. Residues Leu-408–Ser-421 show a composition bias toward polar residues.

This is an uncharacterized protein from Invertebrate iridescent virus 3 (IIV-3).